A 77-amino-acid polypeptide reads, in one-letter code: DNA-directed RNA polymerase subunit Rpo5 (77 aa).

This sequence belongs to the archaeal Rpo5/eukaryotic RPB5 RNA polymerase subunit family. As to quaternary structure, part of the RNA polymerase complex.

It localises to the cytoplasm. The catalysed reaction is RNA(n) + a ribonucleoside 5'-triphosphate = RNA(n+1) + diphosphate. DNA-dependent RNA polymerase (RNAP) catalyzes the transcription of DNA into RNA using the four ribonucleoside triphosphates as substrates. In Methanosphaera stadtmanae (strain ATCC 43021 / DSM 3091 / JCM 11832 / MCB-3), this protein is DNA-directed RNA polymerase subunit Rpo5.